Reading from the N-terminus, the 527-residue chain is F-box protein SKIP2 (527 aa).

The region spanning 39–85 (DRDFTGDLPDECLAHVFQFLGAGDRKRCSLVCKRWLLVDGQSRHRLS) is the F-box domain.

In terms of assembly, part of a SCF (ASK-cullin-F-box) protein ligase complex. Interacts with SKP1A/ASK1, SKP1B/ASK2 and ASK11.

The protein localises to the nucleus. It participates in protein modification; protein ubiquitination. In terms of biological role, component of SCF(ASK-cullin-F-box) E3 ubiquitin ligase complexes, which may mediate the ubiquitination and subsequent proteasomal degradation of target proteins. The protein is F-box protein SKIP2 (SKIP2) of Arabidopsis thaliana (Mouse-ear cress).